Consider the following 182-residue polypeptide: Dephospho-CoA kinase (182 aa).

The DPCK domain maps to 4 to 182 (VVAITGGIGS…IINNDHKIMT (179 aa)). Position 12–17 (12–17 (GSGKTT)) interacts with ATP.

The protein belongs to the CoaE family.

Its subcellular location is the cytoplasm. It carries out the reaction 3'-dephospho-CoA + ATP = ADP + CoA + H(+). The protein operates within cofactor biosynthesis; coenzyme A biosynthesis; CoA from (R)-pantothenate: step 5/5. In terms of biological role, catalyzes the phosphorylation of the 3'-hydroxyl group of dephosphocoenzyme A to form coenzyme A. This is Dephospho-CoA kinase from Aliivibrio fischeri (strain ATCC 700601 / ES114) (Vibrio fischeri).